Reading from the N-terminus, the 788-residue chain is Probable potassium transporter 9 (788 aa).

Over 1 to 21 (MDPEFGRGMAPRKREPWRTTL) the chain is Cytoplasmic. The helical transmembrane segment at 22 to 42 (LLAYQSLGVVYGDLSISPLYV) threads the bilayer. The Extracellular segment spans residues 43–59 (YKSTFAEDITHSESNEE). The helical transmembrane segment at 60 to 80 (IFGVLSFVFWTLTLIPLIKYV) threads the bilayer. Residues 81 to 151 (SIVLRADDNG…EKHKTLQTAL (71 aa)) are Cytoplasmic-facing. The helical transmembrane segment at 152 to 172 (LIMVMIGTCMVIGDGVLTPAI) threads the bilayer. Topologically, residues 173-191 (SVFSAVSGLELSLSRDQHE) are extracellular. Residues 192–212 (YAVIPITCVILVFLFALQHYG) form a helical membrane-spanning segment. Residues 213 to 215 (THR) lie on the Cytoplasmic side of the membrane. A helical membrane pass occupies residues 216-236 (VGFLFAPIVLAWLICMSMLGL). At 237 to 264 (YNIIHWNPQVYRALNPYYMLKFLRKTKK) the chain is on the extracellular side. The chain crosses the membrane as a helical span at residues 265–285 (SGWMSLGGILLCMTGSEAMFA). Residues 286–292 (DLGHFSY) lie on the Cytoplasmic side of the membrane. Residues 293-313 (SAIQLAFTTLVYPALILGYMG) traverse the membrane as a helical segment. Topologically, residues 314–343 (QAAYLSKHHTLNSTYQIGYYISVPESVRWP) are extracellular. The N-linked (GlcNAc...) asparagine glycan is linked to N325. Residues 344 to 364 (VLVLAILASVVGSQAIISGTF) traverse the membrane as a helical segment. The Cytoplasmic segment spans residues 365 to 391 (SIINQSQSLSCFPRVKVVHTSENIHGQ). A helical membrane pass occupies residues 392 to 412 (IYIPEINWLLMVLCIAVTVGF). Over 413 to 422 (RDTKHMGNAS) the chain is Extracellular. An N-linked (GlcNAc...) asparagine glycan is attached at N420. A helical transmembrane segment spans residues 423–443 (GLAVITVMLVTTCLTSLVIML). Residues 444 to 451 (CWHRSPAL) lie on the Cytoplasmic side of the membrane. The chain crosses the membrane as a helical span at residues 452-472 (ALVFFLFFGSIEVLYFSASLI). Over 473–476 (KFRE) the chain is Extracellular. Residues 477-497 (GAWLPIMLALILMAVMFIWHH) form a helical membrane-spanning segment. Over 498–788 (TTIKKYEFDL…LLEVGMVYVL (291 aa)) the chain is Cytoplasmic.

The protein belongs to the HAK/KUP transporter (TC 2.A.72.3) family.

The protein resides in the membrane. Its function is as follows. High-affinity potassium transporter. The chain is Probable potassium transporter 9 (HAK9) from Oryza sativa subsp. japonica (Rice).